We begin with the raw amino-acid sequence, 200 residues long: NADH-quinone oxidoreductase subunit B 2 (200 aa).

Residues Cys-79, Cys-80, Cys-144, and Cys-174 each contribute to the [4Fe-4S] cluster site.

Belongs to the complex I 20 kDa subunit family. NDH-1 is composed of 14 different subunits. Subunits NuoB, C, D, E, F, and G constitute the peripheral sector of the complex. [4Fe-4S] cluster is required as a cofactor.

The protein localises to the cell inner membrane. It catalyses the reaction a quinone + NADH + 5 H(+)(in) = a quinol + NAD(+) + 4 H(+)(out). Functionally, NDH-1 shuttles electrons from NADH, via FMN and iron-sulfur (Fe-S) centers, to quinones in the respiratory chain. The immediate electron acceptor for the enzyme in this species is believed to be ubiquinone. Couples the redox reaction to proton translocation (for every two electrons transferred, four hydrogen ions are translocated across the cytoplasmic membrane), and thus conserves the redox energy in a proton gradient. The sequence is that of NADH-quinone oxidoreductase subunit B 2 from Rhodopseudomonas palustris (strain BisA53).